The chain runs to 60 residues: Short neurotoxin 1 (60 aa).

Disulfide bonds link Cys-3–Cys-22, Cys-17–Cys-39, Cys-41–Cys-52, and Cys-53–Cys-58.

The protein belongs to the three-finger toxin family. Short-chain subfamily. Type I alpha-neurotoxin sub-subfamily. In terms of tissue distribution, expressed by the venom gland.

The protein resides in the secreted. Binds to muscle nicotinic acetylcholine receptor (nAChR) and inhibit acetylcholine from binding to the receptor, thereby impairing neuromuscular transmission. The protein is Short neurotoxin 1 of Dendroaspis polylepis polylepis (Black mamba).